A 203-amino-acid polypeptide reads, in one-letter code: Imidazole glycerol phosphate synthase subunit HisH (203 aa).

One can recognise a Glutamine amidotransferase type-1 domain in the interval 1–203; it reads MIGIIDYGMG…KNFGEMIKCL (203 aa). The active-site Nucleophile is the cysteine 79. Active-site residues include histidine 181 and glutamate 183.

Heterodimer of HisH and HisF.

It is found in the cytoplasm. It carries out the reaction 5-[(5-phospho-1-deoxy-D-ribulos-1-ylimino)methylamino]-1-(5-phospho-beta-D-ribosyl)imidazole-4-carboxamide + L-glutamine = D-erythro-1-(imidazol-4-yl)glycerol 3-phosphate + 5-amino-1-(5-phospho-beta-D-ribosyl)imidazole-4-carboxamide + L-glutamate + H(+). The enzyme catalyses L-glutamine + H2O = L-glutamate + NH4(+). It participates in amino-acid biosynthesis; L-histidine biosynthesis; L-histidine from 5-phospho-alpha-D-ribose 1-diphosphate: step 5/9. Its function is as follows. IGPS catalyzes the conversion of PRFAR and glutamine to IGP, AICAR and glutamate. The HisH subunit catalyzes the hydrolysis of glutamine to glutamate and ammonia as part of the synthesis of IGP and AICAR. The resulting ammonia molecule is channeled to the active site of HisF. The chain is Imidazole glycerol phosphate synthase subunit HisH from Caldanaerobacter subterraneus subsp. tengcongensis (strain DSM 15242 / JCM 11007 / NBRC 100824 / MB4) (Thermoanaerobacter tengcongensis).